Reading from the N-terminus, the 173-residue chain is Small ribosomal subunit protein mS25 (173 aa).

It belongs to the mitochondrion-specific ribosomal protein mS25 family. In terms of assembly, component of the mitochondrial ribosome small subunit (28S) which comprises a 12S rRNA and about 30 distinct proteins.

It is found in the mitochondrion. This chain is Small ribosomal subunit protein mS25 (MRPS25), found in Bos taurus (Bovine).